A 367-amino-acid chain; its full sequence is uncharacterized protein (367 aa).

A helical membrane pass occupies residues 6–26; the sequence is IAAGVVVALAAVWCTSAWFTG.

It to E.coli YdgA and YihF.

It localises to the membrane. This is an uncharacterized protein from Haemophilus influenzae (strain ATCC 51907 / DSM 11121 / KW20 / Rd).